We begin with the raw amino-acid sequence, 328 residues long: UPF0252 protein PF0978 (328 aa).

The helical transmembrane segment at 3–23 threads the bilayer; the sequence is VPLLILLFLVLTSGCIAPSTP.

This sequence belongs to the UPF0252 family.

Its subcellular location is the membrane. The protein is UPF0252 protein PF0978 of Pyrococcus furiosus (strain ATCC 43587 / DSM 3638 / JCM 8422 / Vc1).